The following is a 991-amino-acid chain: Polyribonucleotide nucleotidyltransferase 2, mitochondrial (991 aa).

The transit peptide at 1–39 directs the protein to the mitochondrion; it reads MSSIVNRASSASLPNFLAWRALGFRTICSGRLGFAPSVP. Residues 609–667 enclose the KH domain; the sequence is PRLATLKYSNDSLRTLIGPMGVLKRKIEVETGARLSIDNGTLTIVAKNQDVMEKAQEQV. The S1 motif 1 domain maps to 678–746; that stretch reads GGVYKGTVSS…VRGNIKLSRK (69 aa). Residues 813 to 865 are disordered; it reads EAEKSSPVNDNDKPRRAATSKPDRKPKSTASKLIATQKEEEALESIAPEETSA. A compositionally biased stretch (basic and acidic residues) spans 822–838; that stretch reads DNDKPRRAATSKPDRKP. One can recognise an S1 motif 2 domain in the interval 925–987; sequence GTEMTATVDH…GVPVMALVDE (63 aa).

Belongs to the polyribonucleotide nucleotidyltransferase family.

It is found in the mitochondrion. The enzyme catalyses RNA(n+1) + phosphate = RNA(n) + a ribonucleoside 5'-diphosphate. Its function is as follows. Involved in the 3'-end maturation of mitochondrial mRNAs, rRNAs and tRNAs. Functions as a poly(A) mRNA 3'-5' degrading phosphorylase and is required for the degradation of highly expressed transcripts of non-coding regions. The chain is Polyribonucleotide nucleotidyltransferase 2, mitochondrial (PNP2) from Arabidopsis thaliana (Mouse-ear cress).